Consider the following 340-residue polypeptide: 7,8-didemethyl-8-hydroxy-5-deazariboflavin synthase (340 aa).

The region spanning 25–256 (ATYSPAYTIV…SDITIQIPPN (232 aa)) is the Radical SAM core domain. 3 residues coordinate [4Fe-4S] cluster: Cys39, Cys43, and Cys46.

The protein belongs to the radical SAM superfamily. CofG family. Consists of two subunits, CofG and CofH. The cofactor is [4Fe-4S] cluster.

The catalysed reaction is 5-amino-5-(4-hydroxybenzyl)-6-(D-ribitylimino)-5,6-dihydrouracil + S-adenosyl-L-methionine = 7,8-didemethyl-8-hydroxy-5-deazariboflavin + 5'-deoxyadenosine + L-methionine + NH4(+) + H(+). The protein operates within cofactor biosynthesis; coenzyme F0 biosynthesis. In terms of biological role, catalyzes the radical-mediated synthesis of 7,8-didemethyl-8-hydroxy-5-deazariboflavin from 5-amino-5-(4-hydroxybenzyl)-6-(D-ribitylimino)-5,6-dihydrouracil. This is 7,8-didemethyl-8-hydroxy-5-deazariboflavin synthase from Trichormus variabilis (strain ATCC 29413 / PCC 7937) (Anabaena variabilis).